We begin with the raw amino-acid sequence, 117 residues long: Large ribosomal subunit protein uL24 (117 aa).

This sequence belongs to the universal ribosomal protein uL24 family. As to quaternary structure, part of the 50S ribosomal subunit.

In terms of biological role, one of two assembly initiator proteins, it binds directly to the 5'-end of the 23S rRNA, where it nucleates assembly of the 50S subunit. One of the proteins that surrounds the polypeptide exit tunnel on the outside of the subunit. The protein is Large ribosomal subunit protein uL24 of Trichormus variabilis (strain ATCC 29413 / PCC 7937) (Anabaena variabilis).